A 129-amino-acid chain; its full sequence is Glycine cleavage system H protein (129 aa).

The region spanning 24 to 106 (EAVVGITEHA…YGAGWLFRIK (83 aa)) is the Lipoyl-binding domain. Lys65 is subject to N6-lipoyllysine.

Belongs to the GcvH family. The glycine cleavage system is composed of four proteins: P, T, L and H. Requires (R)-lipoate as cofactor.

Functionally, the glycine cleavage system catalyzes the degradation of glycine. The H protein shuttles the methylamine group of glycine from the P protein to the T protein. The polypeptide is Glycine cleavage system H protein (Aeromonas salmonicida (strain A449)).